A 431-amino-acid polypeptide reads, in one-letter code: Maintenance of mitochondrial morphology protein 1 (431 aa).

The Lumenal segment spans residues 1–103 (MVSALEVKSI…QLISWSFAQG (103 aa)). The helical transmembrane segment at 104 to 124 (LIIGQLSVVIFLIFFVKFFIF) threads the bilayer. At 125–431 (TDASSKMDNP…EDESSKTPHS (307 aa)) the chain is on the cytoplasmic side. The region spanning 192–404 (SAESLDWFNV…EPRFQSVKLP (213 aa)) is the SMP-LTD domain. The tract at residues 412 to 431 (NTREEVIHKTEDESSKTPHS) is disordered.

Belongs to the MMM1 family. Homodimer. Component of the ER-mitochondria encounter structure (ERMES) or MDM complex, composed of MMM1, MDM10, MDM12 and MDM34. An MMM1 homodimer associates with one molecule of MDM12 on each side in a pairwise head-to-tail manner, and the SMP-LTD domains of MMM1 and MDM12 generate a continuous hydrophobic tunnel for phospholipid trafficking.

The protein resides in the endoplasmic reticulum membrane. In terms of biological role, component of the ERMES/MDM complex, which serves as a molecular tether to connect the endoplasmic reticulum (ER) and mitochondria. Components of this complex are involved in the control of mitochondrial shape and protein biogenesis, and function in nonvesicular lipid trafficking between the ER and mitochondria. The MDM12-MMM1 subcomplex functions in the major beta-barrel assembly pathway that is responsible for biogenesis of all outer membrane beta-barrel proteins, and acts in a late step after the SAM complex. The MDM10-MDM12-MMM1 subcomplex further acts in the TOM40-specific pathway after the action of the MDM12-MMM1 complex. Essential for establishing and maintaining the structure of mitochondria and maintenance of mtDNA nucleoids. This Candida glabrata (strain ATCC 2001 / BCRC 20586 / JCM 3761 / NBRC 0622 / NRRL Y-65 / CBS 138) (Yeast) protein is Maintenance of mitochondrial morphology protein 1.